The primary structure comprises 388 residues: LL-diaminopimelate aminotransferase (388 aa).

2 residues coordinate substrate: Tyr-16 and Gly-41. Pyridoxal 5'-phosphate contacts are provided by residues Tyr-70, 104 to 105 (SK), Tyr-129, Asn-179, Tyr-210, and 239 to 241 (SLS). Lys-105, Tyr-129, and Asn-179 together coordinate substrate. An N6-(pyridoxal phosphate)lysine modification is found at Lys-242. Arg-250 serves as a coordination point for pyridoxal 5'-phosphate. Residue Arg-368 coordinates substrate.

This sequence belongs to the class-I pyridoxal-phosphate-dependent aminotransferase family. LL-diaminopimelate aminotransferase subfamily. In terms of assembly, homodimer. Pyridoxal 5'-phosphate serves as cofactor.

The catalysed reaction is (2S,6S)-2,6-diaminopimelate + 2-oxoglutarate = (S)-2,3,4,5-tetrahydrodipicolinate + L-glutamate + H2O + H(+). The protein operates within amino-acid biosynthesis; L-lysine biosynthesis via DAP pathway; LL-2,6-diaminopimelate from (S)-tetrahydrodipicolinate (aminotransferase route): step 1/1. Its function is as follows. Involved in the synthesis of meso-diaminopimelate (m-DAP or DL-DAP), required for both lysine and peptidoglycan biosynthesis. Catalyzes the direct conversion of tetrahydrodipicolinate to LL-diaminopimelate. The protein is LL-diaminopimelate aminotransferase of Nitratidesulfovibrio vulgaris (strain DP4) (Desulfovibrio vulgaris).